The chain runs to 409 residues: Phenoxybenzoate dioxygenase subunit alpha (409 aa).

The Rieske domain occupies 45 to 149; sequence WQPVALSADV…VEERYGLVFA (105 aa). [2Fe-2S] cluster-binding residues include Cys-85, His-87, Cys-104, and His-107. Fe cation is bound by residues His-210 and His-215.

Belongs to the bacterial ring-hydroxylating dioxygenase alpha subunit family. This dioxygenase system consists of two proteins: the alpha subunit (PobA) and a subunit (PobB) that acts as a ferredoxin and a ferredoxin reductase. Requires [2Fe-2S] cluster as cofactor. Fe cation is required as a cofactor.

The protein operates within aromatic compound metabolism; carboxydiphenyl ether degradation. Functionally, degrades exclusively diarylether compounds having carboxyl groups in the 3- or 4-position. Yields a hemiacetal that spontaneously hydrolyzes to phenol and protocatechuate. The protein is Phenoxybenzoate dioxygenase subunit alpha (pobA) of Ectopseudomonas oleovorans (Pseudomonas oleovorans).